The following is a 289-amino-acid chain: Alpha-soluble NSF attachment protein (289 aa).

Residues 112 to 145 (GKYYKEIAELYELEQNFEQAIIYFEKAADIYQSE) form a TPR repeat.

This sequence belongs to the SNAP family.

The protein localises to the membrane. Functionally, required for vesicular transport between the endoplasmic reticulum and the Golgi apparatus. The sequence is that of Alpha-soluble NSF attachment protein from Vitis vinifera (Grape).